We begin with the raw amino-acid sequence, 400 residues long: ATP-dependent RNA helicase Ddx1 (400 aa).

Residues 1-60 (DDEADRLLKQGYTDLIERLHKQIPKITSDGCRLQMIVCSATLHAFEVKKMAERLMHFPTW) enclose the Helicase ATP-binding domain. Residues 2–5 (DEAD) carry the DEAD box motif. Residues 115-316 (TFSQAVKLLK…QVVKSLDVPV (202 aa)) enclose the Helicase C-terminal domain.

The protein belongs to the DEAD box helicase family. DDX1 subfamily.

The enzyme catalyses ATP + H2O = ADP + phosphate + H(+). In terms of biological role, acts as an ATP-dependent RNA helicase, able to unwind both RNA-RNA and RNA-DNA duplexes. Possesses 5' single-stranded RNA overhang nuclease activity. This chain is ATP-dependent RNA helicase Ddx1 (Ddx1), found in Drosophila virilis (Fruit fly).